Here is a 364-residue protein sequence, read N- to C-terminus: Methylthioribose-1-phosphate isomerase (364 aa).

Asp-254 (proton donor) is an active-site residue.

The protein belongs to the eIF-2B alpha/beta/delta subunits family. MtnA subfamily.

The protein localises to the cytoplasm. It is found in the nucleus. The enzyme catalyses 5-(methylsulfanyl)-alpha-D-ribose 1-phosphate = 5-(methylsulfanyl)-D-ribulose 1-phosphate. The protein operates within amino-acid biosynthesis; L-methionine biosynthesis via salvage pathway; L-methionine from S-methyl-5-thio-alpha-D-ribose 1-phosphate: step 1/6. Functionally, catalyzes the interconversion of methylthioribose-1-phosphate (MTR-1-P) into methylthioribulose-1-phosphate (MTRu-1-P). This Drosophila simulans (Fruit fly) protein is Methylthioribose-1-phosphate isomerase.